We begin with the raw amino-acid sequence, 325 residues long: MATH domain and coiled-coil domain-containing protein At3g58340 (325 aa).

The MATH domain occupies 6 to 131 (DKKFCWEIKN…NGQVMIVAEV (126 aa)). Residues 266 to 315 (KVDWLEKKLDHVKEKKEKEQSGLIILQGIEQQLHELMHKCEKKKSEVLSV) are a coiled coil.

The protein is MATH domain and coiled-coil domain-containing protein At3g58340 of Arabidopsis thaliana (Mouse-ear cress).